A 318-amino-acid polypeptide reads, in one-letter code: UAP56-interacting factor (318 aa).

Met-1 is subject to N-acetylmethionine. The segment at 1 to 27 (MNRFSTRLMGATATPPPAPPKARSNEN) is disordered. Residue Thr-14 is modified to Phosphothreonine. At Ser-24 the chain carries Phosphoserine. Positions 27–45 (NLDKIDMSLDDIIKLNRKE) match the UAP56-binding motif motif. Residues Ser-61 and Ser-118 each carry the phosphoserine modification. A Glycyl lysine isopeptide (Lys-Gly) (interchain with G-Cter in SUMO1) cross-link involves residue Lys-140. A compositionally biased stretch (polar residues) spans 163–180 (LNRKNNIPNNFTRSGNKL). Positions 163-183 (LNRKNNIPNNFTRSGNKLSHQ) are disordered. Lys-261 is covalently cross-linked (Glycyl lysine isopeptide (Lys-Gly) (interchain with G-Cter in SUMO2)).

Belongs to the UIF family. In terms of assembly, interacts with DDX39B/UAP56 and NXF1; interaction with DDX39B/UAP56 and NXF1 are mutually exclusive. Interacts with SSRP1; required for its recruitment to mRNAs. Interacts with CHTOP.

The protein resides in the nucleus. Its subcellular location is the nucleoplasm. The protein localises to the nucleus speckle. In terms of biological role, required for mRNA export from the nucleus to the cytoplasm. Acts as an adapter that uses the DDX39B/UAP56-NFX1 pathway to ensure efficient mRNA export and delivering to the nuclear pore. Associates with spliced and unspliced mRNAs simultaneously with ALYREF/THOC4. The sequence is that of UAP56-interacting factor (FYTTD1) from Bos taurus (Bovine).